Here is a 349-residue protein sequence, read N- to C-terminus: uncharacterized protein (349 aa).

An N-terminal signal peptide occupies residues 1 to 16; sequence MLFKISFLALIASALA. At 17 to 326 the chain is on the lumenal side; it reads MSINSPTNGD…SSSSSSSAAS (310 aa). Disordered stretches follow at residues 115-190 and 243-322; these read ASSS…SSYR and TNGT…SSSS. Low complexity-rich tracts occupy residues 116 to 176, 243 to 278, and 289 to 322; these read SSSS…SSRT, TNGT…TASG, and STND…SSSS. A helical transmembrane segment spans residues 327–347; it reads LVSQPVGISAVIAFFAVALSL. At 348-349 the chain is on the cytoplasmic side; sequence TL.

It localises to the endoplasmic reticulum membrane. This is an uncharacterized protein from Schizosaccharomyces pombe (strain 972 / ATCC 24843) (Fission yeast).